The sequence spans 196 residues: Protein hunchback (196 aa).

2 disordered regions span residues 16 to 60 and 90 to 196; these read SHHH…NTNL and AMTP…KYMA. The segment covering 17–30 has biased composition (basic residues); it reads HHHHHHHAHHSYHQ. The span at 92 to 103 shows a compositional bias: polar residues; that stretch reads TPSSSNNDQNSP. The segment covering 125-144 has biased composition (low complexity); sequence PTATTTTTPAAAAPTTTAAT. The segment covering 176–196 has biased composition (basic and acidic residues); that stretch reads AEREKEHDLMSNSSEDMKYMA.

This sequence belongs to the hunchback C2H2-type zinc-finger protein family.

It is found in the nucleus. Functionally, gap class segmentation protein that controls development of head structures. This Drosophila silvestris (Fruit fly) protein is Protein hunchback (hb).